Reading from the N-terminus, the 424-residue chain is STAM-binding protein (424 aa).

The tract at residues Met1–Lys127 is interaction with CHMP3. Phosphoserine occurs at positions 2 and 48. An interaction with STAM region spans residues Pro227 to Pro231. A Phosphoserine modification is found at Ser243. Positions Ile257–Ser388 constitute an MPN domain. 7 residues coordinate Zn(2+): His335, His337, Asp348, His350, Cys390, His396, and His398. The JAMM motif signature appears at His335–Asp348.

The protein belongs to the peptidase M67C family. As to quaternary structure, interacts with STAM. Interacts with SMAD6 and SMAD7. Interacts with CHMP3; the interaction appears to relieve the autoinhibition of CHMP3. Interacts with SMURF2 and RNF11; this interaction promotes ubiquitination. The cofactor is Zn(2+). Phosphorylated after BMP type I receptor activation. In terms of processing, ubiquitinated by SMURF2 in the presence of RNF11.

Its subcellular location is the nucleus. The protein localises to the membrane. It localises to the cytoplasm. The protein resides in the early endosome. Its activity is regulated as follows. Inhibited by N-ethylmaleimide. Zinc metalloprotease that specifically cleaves 'Lys-63'-linked polyubiquitin chains. Does not cleave 'Lys-48'-linked polyubiquitin chains. Plays a role in signal transduction for cell growth and MYC induction mediated by IL-2 and GM-CSF. Potentiates BMP (bone morphogenetic protein) signaling by antagonizing the inhibitory action of SMAD6 and SMAD7. Has a key role in regulation of cell surface receptor-mediated endocytosis and ubiquitin-dependent sorting of receptors to lysosomes. Endosomal localization of STAMBP is required for efficient EGFR degradation but not for its internalization. Involved in the negative regulation of PI3K-AKT-mTOR and RAS-MAP signaling pathways. The sequence is that of STAM-binding protein (Stambp) from Rattus norvegicus (Rat).